We begin with the raw amino-acid sequence, 266 residues long: Segregation and condensation protein A (266 aa).

This sequence belongs to the ScpA family. As to quaternary structure, component of a cohesin-like complex composed of ScpA, ScpB and the Smc homodimer, in which ScpA and ScpB bind to the head domain of Smc. The presence of the three proteins is required for the association of the complex with DNA.

It is found in the cytoplasm. Its function is as follows. Participates in chromosomal partition during cell division. May act via the formation of a condensin-like complex containing Smc and ScpB that pull DNA away from mid-cell into both cell halves. The protein is Segregation and condensation protein A of Coxiella burnetii (strain RSA 493 / Nine Mile phase I).